A 212-amino-acid polypeptide reads, in one-letter code: Regulatory protein RecX (212 aa).

It belongs to the RecX family.

It is found in the cytoplasm. In terms of biological role, modulates RecA activity. This Clostridium perfringens (strain SM101 / Type A) protein is Regulatory protein RecX.